The chain runs to 217 residues: Uracil-DNA glycosylase (217 aa).

The active-site Proton acceptor is aspartate 62.

This sequence belongs to the uracil-DNA glycosylase (UDG) superfamily. UNG family.

It is found in the cytoplasm. The enzyme catalyses Hydrolyzes single-stranded DNA or mismatched double-stranded DNA and polynucleotides, releasing free uracil.. Its function is as follows. Excises uracil residues from the DNA which can arise as a result of misincorporation of dUMP residues by DNA polymerase or due to deamination of cytosine. In Streptococcus equi subsp. equi (strain 4047), this protein is Uracil-DNA glycosylase.